A 303-amino-acid chain; its full sequence is Mycothiol acetyltransferase (303 aa).

N-acetyltransferase domains follow at residues 6–134 (TSLA…VEGD) and 154–303 (NEAY…QSSS). Glutamate 37 serves as a coordination point for 1D-myo-inositol 2-(L-cysteinylamino)-2-deoxy-alpha-D-glucopyranoside. Residues 75-77 (VVV) and 83-88 (RQGYGS) contribute to the acetyl-CoA site. Positions 180, 221, and 233 each coordinate 1D-myo-inositol 2-(L-cysteinylamino)-2-deoxy-alpha-D-glucopyranoside. Residues 237-239 (VGL) and 244-250 (RRRGLGD) each bind acetyl-CoA. Tyrosine 271 lines the 1D-myo-inositol 2-(L-cysteinylamino)-2-deoxy-alpha-D-glucopyranoside pocket. Position 276–281 (276–281 (NESARR)) interacts with acetyl-CoA.

Belongs to the acetyltransferase family. MshD subfamily. As to quaternary structure, monomer.

It catalyses the reaction 1D-myo-inositol 2-(L-cysteinylamino)-2-deoxy-alpha-D-glucopyranoside + acetyl-CoA = mycothiol + CoA + H(+). Catalyzes the transfer of acetyl from acetyl-CoA to desacetylmycothiol (Cys-GlcN-Ins) to form mycothiol. The sequence is that of Mycothiol acetyltransferase from Corynebacterium diphtheriae (strain ATCC 700971 / NCTC 13129 / Biotype gravis).